The following is a 470-amino-acid chain: MNARIADLLYNYLGRPPSLSEYHMLKLQHRNIQKIIAFNKDIFISLIKKNKKKFFSDIDLTSSEIKTSVLSYFSKQRDTYSIGKLYTIIELQTILVSTYTDVLGVLTLKGPDMFPSSTRYDIKSIKQIATSALHAMNVAVISDKVMGRHNVSPLVSNVNALMEEYLRRHNKNCICYGSYSLYLLNPEVKYGDIDILQTNSRTFLIDLAFLIKFITGSNVVLLKVPYLKNYMVLKDKDDNHIIDSFNIRQETMQVIPKVLIDNIYIVDPALQLMSMFKMFSQIDRLEDLARNPEKLTVRLATLMEYVRVKYGIILNGESNHMPMKGVLDKDKRIIDVDTSGYNFSFKKCYVYLDESSLSSDILDLNADDAVDFENVSNSAYLINGDVLYTYFSNTILLSDPDTIHEISNKAMSAHILIYQILTGNDIRQPLSDLVNSLMYNEKVLIHEVIPRDKKTGKHGIVDIEKDIITH.

Residues D192 and D194 contribute to the active site.

Belongs to the poxviridae poly(A) polymerase catalytic subunit family. In terms of assembly, heterodimer of a large (catalytic) subunit and a small (regulatory) subunit.

It catalyses the reaction RNA(n) + ATP = RNA(n)-3'-adenine ribonucleotide + diphosphate. Functionally, polymerase that creates the 3'-poly(A) tail of mRNA's. The sequence is that of Poly(A) polymerase catalytic subunit (PAPL) from Oryctolagus cuniculus (Rabbit).